The chain runs to 251 residues: Developmental protein SEPALLATA 1 (251 aa).

The region spanning 3–57 (RGRVELKRIENKINRQVTFAKRRNGLLKKAYELSVLCDAEVALIIFSNRGKLYEF) is the MADS-box domain. Residues 85–176 (AKELENSYRE…ALAMKLDDMI (92 aa)) are a coiled coil. One can recognise a K-box domain in the interval 88–178 (LENSYREYLK…AMKLDDMIGV (91 aa)).

In terms of assembly, heterodimer with AGAMOUS capable of binding to CArG-box sequences. Interacts with AGL16. Interacts with TT16/AGL32. Expressed mainly in carpels, and weakly in stamens.

Its subcellular location is the nucleus. Probable transcription factor. Functions with SEPALLATA2/AGL4 and SEPALLATA3/AGL9 to ensure proper development of petals, stamens and carpels, and to prevent the indeterminate growth of the flower meristem. Forms a heterodimer via the K-box domain with AGAMOUS, that could be involved in genes regulation during floral meristem development. The chain is Developmental protein SEPALLATA 1 (SEP1) from Arabidopsis thaliana (Mouse-ear cress).